The primary structure comprises 335 residues: Acetyl-coenzyme A carboxylase carboxyl transferase subunit alpha (335 aa).

The 255-residue stretch at 38-292 folds into the CoA carboxyltransferase C-terminal domain; that stretch reads TLEQKAEELR…ATALSEEIEN (255 aa).

The protein belongs to the AccA family. Acetyl-CoA carboxylase is a heterohexamer composed of biotin carboxyl carrier protein (AccB), biotin carboxylase (AccC) and two subunits each of ACCase subunit alpha (AccA) and ACCase subunit beta (AccD).

Its subcellular location is the cytoplasm. The catalysed reaction is N(6)-carboxybiotinyl-L-lysyl-[protein] + acetyl-CoA = N(6)-biotinyl-L-lysyl-[protein] + malonyl-CoA. It functions in the pathway lipid metabolism; malonyl-CoA biosynthesis; malonyl-CoA from acetyl-CoA: step 1/1. In terms of biological role, component of the acetyl coenzyme A carboxylase (ACC) complex. First, biotin carboxylase catalyzes the carboxylation of biotin on its carrier protein (BCCP) and then the CO(2) group is transferred by the carboxyltransferase to acetyl-CoA to form malonyl-CoA. The sequence is that of Acetyl-coenzyme A carboxylase carboxyl transferase subunit alpha from Heliobacterium modesticaldum (strain ATCC 51547 / Ice1).